We begin with the raw amino-acid sequence, 357 residues long: Decapping nuclease RAI1 (357 aa).

E157 serves as a coordination point for a divalent metal cation. Positions 189 and 206 each coordinate substrate. Residues D208, E226, and L227 each coordinate a divalent metal cation. Substrate-binding residues include K228 and Q252.

Belongs to the DXO/Dom3Z family. Interacts with rat1; the interaction is direct, stabilizes rat1 protein structure and stimulates its exoribonuclease activity. The interaction also stimulates rai1 pyrophosphohydrolase activity, probably by recruiting it to mRNA substrates. Requires a divalent metal cation as cofactor.

It localises to the nucleus. The enzyme catalyses a 5'-end NAD(+)-phospho-ribonucleoside in mRNA + H2O = a 5'-end phospho-ribonucleoside in mRNA + NAD(+) + H(+). It catalyses the reaction a 5'-end (N(7)-methyl 5'-triphosphoguanosine)-ribonucleoside-ribonucleotide in mRNA + H2O = a (N(7)-methyl 5'-triphosphoguanosine)-nucleoside + a 5'-end phospho-ribonucleoside in mRNA + H(+). It carries out the reaction a 5'-end triphospho-ribonucleoside in mRNA + H2O = a 5'-end phospho-ribonucleoside in mRNA + diphosphate + H(+). Its function is as follows. Decapping enzyme for NAD-capped RNAs: specifically hydrolyzes the nicotinamide adenine dinucleotide (NAD) cap from a subset of RNAs by removing the entire NAD moiety from the 5'-end of an NAD-capped RNA. The NAD-cap is present at the 5'-end of some RNAs and snoRNAs. In contrast to the canonical 5'-end N7 methylguanosine (m7G) cap, the NAD cap promotes mRNA decay. Also acts as a non-canonical decapping enzyme that removes the entire cap structure of m7G capped or incompletely capped RNAs. Has decapping activity toward incomplete 5'-end m7G cap mRNAs such as unmethylated 5'-end-capped RNA (cap0), while it has no activity toward 2'-O-ribose methylated m7G cap (cap1). Also possesses RNA 5'-pyrophosphohydrolase activity by hydrolyzing the 5'-end triphosphate to release pyrophosphates. Stimulates exoribonuclease activity of Rat1, allowing it to degrade RNAs with stable secondary structure more effectively. The protein is Decapping nuclease RAI1 (rai1) of Emericella nidulans (strain FGSC A4 / ATCC 38163 / CBS 112.46 / NRRL 194 / M139) (Aspergillus nidulans).